A 153-amino-acid polypeptide reads, in one-letter code: Transcriptional repressor NrdR (153 aa).

A zinc finger lies at 3–34 (CPFCNHLHDKVVDSRESKEGDAIRRRRECLEC). The 91-residue stretch at 49–139 (YMVVKKDGRR…VYRDFQDEQA (91 aa)) folds into the ATP-cone domain.

Belongs to the NrdR family. Zn(2+) serves as cofactor.

Functionally, negatively regulates transcription of bacterial ribonucleotide reductase nrd genes and operons by binding to NrdR-boxes. The polypeptide is Transcriptional repressor NrdR (Solibacter usitatus (strain Ellin6076)).